A 377-amino-acid chain; its full sequence is Succinyl-diaminopimelate desuccinylase (377 aa).

H67 lines the Zn(2+) pocket. The active site involves D69. Zn(2+) is bound at residue D100. E134 functions as the Proton acceptor in the catalytic mechanism. The Zn(2+) site is built by E135, E163, and H349.

It belongs to the peptidase M20A family. DapE subfamily. In terms of assembly, homodimer. It depends on Zn(2+) as a cofactor. Co(2+) is required as a cofactor.

It catalyses the reaction N-succinyl-(2S,6S)-2,6-diaminopimelate + H2O = (2S,6S)-2,6-diaminopimelate + succinate. It functions in the pathway amino-acid biosynthesis; L-lysine biosynthesis via DAP pathway; LL-2,6-diaminopimelate from (S)-tetrahydrodipicolinate (succinylase route): step 3/3. Catalyzes the hydrolysis of N-succinyl-L,L-diaminopimelic acid (SDAP), forming succinate and LL-2,6-diaminopimelate (DAP), an intermediate involved in the bacterial biosynthesis of lysine and meso-diaminopimelic acid, an essential component of bacterial cell walls. The sequence is that of Succinyl-diaminopimelate desuccinylase from Mannheimia succiniciproducens (strain KCTC 0769BP / MBEL55E).